We begin with the raw amino-acid sequence, 25 residues long: Pancreatic triacylglycerol lipase (25 aa).

A disulfide bridge connects residues Cys4 and Cys10.

The protein belongs to the AB hydrolase superfamily. Lipase family. As to quaternary structure, forms a 1:1 stoichiometric complex with (pro)colipase/CLPS.

It is found in the secreted. It catalyses the reaction a triacylglycerol + H2O = a diacylglycerol + a fatty acid + H(+). The enzyme catalyses 1,2,3-tributanoylglycerol + H2O = dibutanoylglycerol + butanoate + H(+). The catalysed reaction is 1,2,3-tri-(9Z-octadecenoyl)-glycerol + H2O = di-(9Z)-octadecenoylglycerol + (9Z)-octadecenoate + H(+). It carries out the reaction all-trans-retinyl hexadecanoate + H2O = all-trans-retinol + hexadecanoate + H(+). It catalyses the reaction 1,2-di-(9Z-octadecenoyl)-glycerol + H2O = (9Z-octadecenoyl)-glycerol + (9Z)-octadecenoate + H(+). Its activity is regulated as follows. Inhibited by bile salts, is reactivated by (pro)colipase/CLPS. In terms of biological role, plays an important role in fat metabolism. It preferentially splits the esters of long-chain fatty acids at positions 1 and 3, producing mainly 2-monoacylglycerol and free fatty acids, and shows considerably higher activity against insoluble emulsified substrates than against soluble ones. This chain is Pancreatic triacylglycerol lipase (PNLIP), found in Felis catus (Cat).